A 725-amino-acid polypeptide reads, in one-letter code: Polyribonucleotide nucleotidyltransferase (725 aa).

Positions 487 and 493 each coordinate Mg(2+). Residues 554-613 (PRIETMQIPTDKIREVIGTGGKVIREIVEKTGAKIDIQDTGVIKIASSDAKAIKAAYNWI) form the KH domain. The S1 motif domain occupies 623 to 691 (GMIYDGTVVK…ERGKIRLSMK (69 aa)). Residues 697–725 (TGEDITEKLKAEREADRNRERQARQSAGE) form a disordered region. Basic and acidic residues predominate over residues 701 to 719 (ITEKLKAEREADRNRERQA).

Belongs to the polyribonucleotide nucleotidyltransferase family. Mg(2+) is required as a cofactor.

It is found in the cytoplasm. It carries out the reaction RNA(n+1) + phosphate = RNA(n) + a ribonucleoside 5'-diphosphate. Its function is as follows. Involved in mRNA degradation. Catalyzes the phosphorolysis of single-stranded polyribonucleotides processively in the 3'- to 5'-direction. The sequence is that of Polyribonucleotide nucleotidyltransferase from Methylobacterium nodulans (strain LMG 21967 / CNCM I-2342 / ORS 2060).